The following is a 244-amino-acid chain: 1-(5-phosphoribosyl)-5-[(5-phosphoribosylamino)methylideneamino] imidazole-4-carboxamide isomerase (244 aa).

The active-site Proton acceptor is the Asp11. The active-site Proton donor is Asp132.

The protein belongs to the HisA/HisF family.

It localises to the cytoplasm. It carries out the reaction 1-(5-phospho-beta-D-ribosyl)-5-[(5-phospho-beta-D-ribosylamino)methylideneamino]imidazole-4-carboxamide = 5-[(5-phospho-1-deoxy-D-ribulos-1-ylimino)methylamino]-1-(5-phospho-beta-D-ribosyl)imidazole-4-carboxamide. Its pathway is amino-acid biosynthesis; L-histidine biosynthesis; L-histidine from 5-phospho-alpha-D-ribose 1-diphosphate: step 4/9. This is 1-(5-phosphoribosyl)-5-[(5-phosphoribosylamino)methylideneamino] imidazole-4-carboxamide isomerase from Sphingopyxis alaskensis (strain DSM 13593 / LMG 18877 / RB2256) (Sphingomonas alaskensis).